Consider the following 153-residue polypeptide: Small ribosomal subunit protein uS9 (153 aa).

Positions K122–R153 are disordered. Positions R129–K138 are enriched in basic and acidic residues. Positions Y139–R153 are enriched in basic residues.

The protein belongs to the universal ribosomal protein uS9 family.

The polypeptide is Small ribosomal subunit protein uS9 (rpsI) (Mycobacterium leprae (strain TN)).